A 321-amino-acid chain; its full sequence is D-alanine--D-alanine ligase (321 aa).

One can recognise an ATP-grasp domain in the interval 121-315 (RSWFLTNNIN…FVNLIEEILK (195 aa)). 148–199 (IKRPYVIKPFTQGSSIGVEVIFEEDDFNFANYDFPYGDEVIIEKYIKGRELQ) serves as a coordination point for ATP. Glu-268, Glu-282, and Asn-284 together coordinate Mg(2+).

The protein belongs to the D-alanine--D-alanine ligase family. Requires Mg(2+) as cofactor. Mn(2+) is required as a cofactor.

Its subcellular location is the cytoplasm. The enzyme catalyses 2 D-alanine + ATP = D-alanyl-D-alanine + ADP + phosphate + H(+). It participates in cell wall biogenesis; peptidoglycan biosynthesis. Cell wall formation. The chain is D-alanine--D-alanine ligase from Rickettsia bellii (strain OSU 85-389).